A 272-amino-acid chain; its full sequence is Shikimate dehydrogenase (NADP(+)) (272 aa).

Shikimate is bound by residues 14 to 16 (SKS) and Thr61. Lys65 acts as the Proton acceptor in catalysis. 2 residues coordinate shikimate: Asn86 and Asp102. Residues 126–130 (GAGGA), 150–155 (NRTASK), and Met214 each bind NADP(+). Tyr216 contacts shikimate. Gly239 serves as a coordination point for NADP(+).

This sequence belongs to the shikimate dehydrogenase family. In terms of assembly, homodimer.

The catalysed reaction is shikimate + NADP(+) = 3-dehydroshikimate + NADPH + H(+). Its pathway is metabolic intermediate biosynthesis; chorismate biosynthesis; chorismate from D-erythrose 4-phosphate and phosphoenolpyruvate: step 4/7. Functionally, involved in the biosynthesis of the chorismate, which leads to the biosynthesis of aromatic amino acids. Catalyzes the reversible NADPH linked reduction of 3-dehydroshikimate (DHSA) to yield shikimate (SA). The polypeptide is Shikimate dehydrogenase (NADP(+)) (Pseudoalteromonas atlantica (strain T6c / ATCC BAA-1087)).